The chain runs to 535 residues: Bifunctional purine biosynthesis protein PurH (535 aa).

Positions 6-151 (TRLPIRRALI…KNHKDVAIVV (146 aa)) constitute an MGS-like domain.

This sequence belongs to the PurH family.

It catalyses the reaction (6R)-10-formyltetrahydrofolate + 5-amino-1-(5-phospho-beta-D-ribosyl)imidazole-4-carboxamide = 5-formamido-1-(5-phospho-D-ribosyl)imidazole-4-carboxamide + (6S)-5,6,7,8-tetrahydrofolate. The catalysed reaction is IMP + H2O = 5-formamido-1-(5-phospho-D-ribosyl)imidazole-4-carboxamide. Its pathway is purine metabolism; IMP biosynthesis via de novo pathway; 5-formamido-1-(5-phospho-D-ribosyl)imidazole-4-carboxamide from 5-amino-1-(5-phospho-D-ribosyl)imidazole-4-carboxamide (10-formyl THF route): step 1/1. It participates in purine metabolism; IMP biosynthesis via de novo pathway; IMP from 5-formamido-1-(5-phospho-D-ribosyl)imidazole-4-carboxamide: step 1/1. The protein is Bifunctional purine biosynthesis protein PurH of Pseudomonas paraeruginosa (strain DSM 24068 / PA7) (Pseudomonas aeruginosa (strain PA7)).